A 234-amino-acid polypeptide reads, in one-letter code: MNNQPLLLCNNLCKKYQEGQVLTEVLKNVTFAINQSEMMAIVGSSGSGKSTLLHLLGGLDTPTSGEVLFKGHSLNKMSSGARAELRNHELGFIYQFHHLLPDFNAVENVAMPLLIGGKNRGQAQKKAFEMLAAVGLEKRAHHRPSELSGGERQRVAIARALVNEPSLVLADEPTGNLDLRNADSIFALLGELNRQQGTAFLVVTHDLNLAGRLNRQVEMRDGYLQDELTVTGAL.

In terms of domain architecture, ABC transporter spans 7 to 234 (LLCNNLCKKY…QDELTVTGAL (228 aa)). 43 to 50 (GSSGSGKS) lines the ATP pocket.

It belongs to the ABC transporter superfamily. Lipoprotein translocase (TC 3.A.1.125) family. In terms of assembly, the complex is composed of two ATP-binding proteins (LolD) and two transmembrane proteins (LolC and LolE).

The protein resides in the cell inner membrane. In terms of biological role, part of the ABC transporter complex LolCDE involved in the translocation of mature outer membrane-directed lipoproteins, from the inner membrane to the periplasmic chaperone, LolA. Responsible for the formation of the LolA-lipoprotein complex in an ATP-dependent manner. This is Lipoprotein-releasing system ATP-binding protein LolD from Photorhabdus laumondii subsp. laumondii (strain DSM 15139 / CIP 105565 / TT01) (Photorhabdus luminescens subsp. laumondii).